Consider the following 317-residue polypeptide: Ribosomal protein L11 methyltransferase (317 aa).

Residues T158, G179, D201, and N244 each coordinate S-adenosyl-L-methionine.

It belongs to the methyltransferase superfamily. PrmA family.

Its subcellular location is the cytoplasm. The enzyme catalyses L-lysyl-[protein] + 3 S-adenosyl-L-methionine = N(6),N(6),N(6)-trimethyl-L-lysyl-[protein] + 3 S-adenosyl-L-homocysteine + 3 H(+). Functionally, methylates ribosomal protein L11. The polypeptide is Ribosomal protein L11 methyltransferase (Streptococcus pyogenes serotype M5 (strain Manfredo)).